Reading from the N-terminus, the 184-residue chain is Peptide deformylase (184 aa).

Fe cation contacts are provided by cysteine 98 and histidine 140. Glutamate 141 is an active-site residue. Histidine 144 is a Fe cation binding site.

This sequence belongs to the polypeptide deformylase family. Fe(2+) serves as cofactor.

It catalyses the reaction N-terminal N-formyl-L-methionyl-[peptide] + H2O = N-terminal L-methionyl-[peptide] + formate. Functionally, removes the formyl group from the N-terminal Met of newly synthesized proteins. Requires at least a dipeptide for an efficient rate of reaction. N-terminal L-methionine is a prerequisite for activity but the enzyme has broad specificity at other positions. The chain is Peptide deformylase from Phocaeicola vulgatus (strain ATCC 8482 / DSM 1447 / JCM 5826 / CCUG 4940 / NBRC 14291 / NCTC 11154) (Bacteroides vulgatus).